Reading from the N-terminus, the 112-residue chain is Large ribosomal subunit protein uL22 (112 aa).

The protein belongs to the universal ribosomal protein uL22 family. In terms of assembly, part of the 50S ribosomal subunit.

Functionally, this protein binds specifically to 23S rRNA; its binding is stimulated by other ribosomal proteins, e.g. L4, L17, and L20. It is important during the early stages of 50S assembly. It makes multiple contacts with different domains of the 23S rRNA in the assembled 50S subunit and ribosome. Its function is as follows. The globular domain of the protein is located near the polypeptide exit tunnel on the outside of the subunit, while an extended beta-hairpin is found that lines the wall of the exit tunnel in the center of the 70S ribosome. The protein is Large ribosomal subunit protein uL22 of Anaplasma phagocytophilum (strain HZ).